A 1471-amino-acid chain; its full sequence is Myosin-4 (1471 aa).

Residues 4-57 enclose the Myosin N-terminal SH3-like domain; it reads EVGTKCWYPHKEQGWIGGEVTKNDFFEGTFHLELKLEDGETVSIETNSFENDDD. In terms of domain architecture, Myosin motor spans 71-777; it reads ESTDDLTTLS…MLAFLEKLRT (707 aa). 165–172 contributes to the ATP binding site; the sequence is GESGAGKT. Residues 647–669 form an actin-binding region; sequence LGELMAIINSTNVHYIRCIKPNS. 5 IQ domains span residues 781–801, 804–824, 829–849, 876–898, and 899–928; these read NEIC…LQYL, MESI…TRVD, TRAA…EYYR, MLMA…DYRT, and LKRS…EVEE. Residues 938 to 1063 are a coiled coil; it reads GLLEEAIEFK…LAFIENVIAQ (126 aa). The Dilute domain occupies 1164-1419; it reads SKVLLTVESI…LNYLANVIKR (256 aa).

Belongs to the TRAFAC class myosin-kinesin ATPase superfamily. Myosin family. As to quaternary structure, interacts with SHE2 and SHE3.

The protein localises to the bud. Functionally, part of the mRNA localization machinery that restricts accumulation of certain proteins to the bud and in the daughter cell. Recruited to specific mRNAs including the ASH1 mRNA, coding for a repressor of the HO endonuclease, via its interaction with SHE3. The protein is Myosin-4 (MYO4) of Saccharomyces cerevisiae (strain ATCC 204508 / S288c) (Baker's yeast).